Consider the following 191-residue polypeptide: Cell division protein SepF (191 aa).

The span at 151 to 165 (SSSPEEASPSSVPTE) shows a compositional bias: low complexity. Positions 151 to 191 (SSSPEEASPSSVPTENTPQYSLGKNTTPEPAWGNSKLSAYS) are disordered. A compositionally biased stretch (polar residues) spans 166 to 178 (NTPQYSLGKNTTP).

This sequence belongs to the SepF family. Homodimer. Interacts with FtsZ.

It is found in the cytoplasm. Cell division protein that is part of the divisome complex and is recruited early to the Z-ring. Probably stimulates Z-ring formation, perhaps through the cross-linking of FtsZ protofilaments. Its function overlaps with FtsA. The sequence is that of Cell division protein SepF from Prochlorococcus marinus (strain MIT 9215).